The chain runs to 306 residues: 4-hydroxy-tetrahydrodipicolinate synthase (306 aa).

Pyruvate is bound at residue threonine 49. Tyrosine 136 acts as the Proton donor/acceptor in catalysis. Lysine 164 acts as the Schiff-base intermediate with substrate in catalysis. Isoleucine 207 lines the pyruvate pocket.

It belongs to the DapA family. In terms of assembly, homotetramer; dimer of dimers.

It localises to the cytoplasm. The enzyme catalyses L-aspartate 4-semialdehyde + pyruvate = (2S,4S)-4-hydroxy-2,3,4,5-tetrahydrodipicolinate + H2O + H(+). Its pathway is amino-acid biosynthesis; L-lysine biosynthesis via DAP pathway; (S)-tetrahydrodipicolinate from L-aspartate: step 3/4. Its function is as follows. Catalyzes the condensation of (S)-aspartate-beta-semialdehyde [(S)-ASA] and pyruvate to 4-hydroxy-tetrahydrodipicolinate (HTPA). In Haloarcula marismortui (strain ATCC 43049 / DSM 3752 / JCM 8966 / VKM B-1809) (Halobacterium marismortui), this protein is 4-hydroxy-tetrahydrodipicolinate synthase.